We begin with the raw amino-acid sequence, 313 residues long: Acetyl-coenzyme A carboxylase carboxyl transferase subunit alpha (313 aa).

One can recognise a CoA carboxyltransferase C-terminal domain in the interval 34–288 (KLKDQRDIAL…KNVVLEAVNE (255 aa)).

It belongs to the AccA family. Acetyl-CoA carboxylase is a heterohexamer composed of biotin carboxyl carrier protein (AccB), biotin carboxylase (AccC) and two subunits each of ACCase subunit alpha (AccA) and ACCase subunit beta (AccD).

It localises to the cytoplasm. The catalysed reaction is N(6)-carboxybiotinyl-L-lysyl-[protein] + acetyl-CoA = N(6)-biotinyl-L-lysyl-[protein] + malonyl-CoA. Its pathway is lipid metabolism; malonyl-CoA biosynthesis; malonyl-CoA from acetyl-CoA: step 1/1. In terms of biological role, component of the acetyl coenzyme A carboxylase (ACC) complex. First, biotin carboxylase catalyzes the carboxylation of biotin on its carrier protein (BCCP) and then the CO(2) group is transferred by the carboxyltransferase to acetyl-CoA to form malonyl-CoA. The polypeptide is Acetyl-coenzyme A carboxylase carboxyl transferase subunit alpha (Fusobacterium nucleatum subsp. nucleatum (strain ATCC 25586 / DSM 15643 / BCRC 10681 / CIP 101130 / JCM 8532 / KCTC 2640 / LMG 13131 / VPI 4355)).